The chain runs to 627 residues: Phosphomethylpyrimidine synthase (627 aa).

Residues 1–21 (MSAQQQKNLSESAQVDQQSVQ) show a composition bias toward polar residues. The interval 1–32 (MSAQQQKNLSESAQVDQQSVQPFPRSQKVYVQ) is disordered. Substrate contacts are provided by residues N231, M260, Y289, H325, 345 to 347 (SRG), 386 to 389 (DGLR), and E425. H429 provides a ligand contact to Zn(2+). Y452 provides a ligand contact to substrate. H493 contacts Zn(2+). [4Fe-4S] cluster-binding residues include C573, C576, and C581.

This sequence belongs to the ThiC family. As to quaternary structure, homodimer. Requires [4Fe-4S] cluster as cofactor.

It carries out the reaction 5-amino-1-(5-phospho-beta-D-ribosyl)imidazole + S-adenosyl-L-methionine = 4-amino-2-methyl-5-(phosphooxymethyl)pyrimidine + CO + 5'-deoxyadenosine + formate + L-methionine + 3 H(+). It participates in cofactor biosynthesis; thiamine diphosphate biosynthesis. In terms of biological role, catalyzes the synthesis of the hydroxymethylpyrimidine phosphate (HMP-P) moiety of thiamine from aminoimidazole ribotide (AIR) in a radical S-adenosyl-L-methionine (SAM)-dependent reaction. In Ectopseudomonas mendocina (strain ymp) (Pseudomonas mendocina), this protein is Phosphomethylpyrimidine synthase.